The chain runs to 193 residues: MKGDMDLSVLPNNNHPDKFLQLDVKSLMRSSTLLQASLARFPGGNYPATQHWQNLVYSQREKTIATQRIKGFGVENPVLPESPPASMSSVMKNNPLYGDITLEEAMEERKKSPSWTIEEYDKHSVHTNLSGHLKENPNDLRFWLGDTYTPGFDTLLKKKKKRNKRSKLCHMGLILLLVASILVTIVTLSTIFS.

Position 82 is a phosphoserine (Ser-82). Asn-128 is a glycosylation site (N-linked (GlcNAc...) asparagine). A helical transmembrane segment spans residues 172 to 192 (GLILLLVASILVTIVTLSTIF).

It belongs to the MINAR family. As to quaternary structure, interacts with NOTCH2. Widely expressed in the cortex and Purkinje cells of cerebellum. Expressed in the inner ear, mainly in the hair cells, spiral ganglia, the spiral limbus, and the stria vascularis.

It localises to the lysosome membrane. Its subcellular location is the endoplasmic reticulum membrane. Binds cholesterol and may regulate the distribution and homeostasis of cholesterol in hair cells. May play a role in angiogenesis. In Mus musculus (Mouse), this protein is Major intrinsically disordered NOTCH2-binding receptor 1-like homolog.